The following is a 221-amino-acid chain: PKHD-type hydroxylase A9601_13531 (221 aa).

The Fe2OG dioxygenase domain occupies 80 to 174 (LIHGIMFTKS…RIVCVGWIES (95 aa)). Fe cation-binding residues include His-98, Asp-100, and His-155. Arg-165 is a 2-oxoglutarate binding site.

It depends on Fe(2+) as a cofactor. L-ascorbate serves as cofactor.

This is PKHD-type hydroxylase A9601_13531 from Prochlorococcus marinus (strain AS9601).